The primary structure comprises 142 residues: Large ribosomal subunit protein uL11 (142 aa).

It belongs to the universal ribosomal protein uL11 family. As to quaternary structure, part of the ribosomal stalk of the 50S ribosomal subunit. Interacts with L10 and the large rRNA to form the base of the stalk. L10 forms an elongated spine to which L12 dimers bind in a sequential fashion forming a multimeric L10(L12)X complex. One or more lysine residues are methylated.

Functionally, forms part of the ribosomal stalk which helps the ribosome interact with GTP-bound translation factors. The protein is Large ribosomal subunit protein uL11 of Shewanella halifaxensis (strain HAW-EB4).